The chain runs to 758 residues: Deoxynucleotidyltransferase terminal-interacting protein 2 (758 aa).

Polar residues predominate over residues 1 to 21 (MVVTRSGLSRTRLQESSQQKR). The disordered stretch occupies residues 1-176 (MVVTRSGLSR…SQSGTVSDAE (176 aa)). 4 positions are modified to phosphoserine: S17, S133, S137, and S140. The segment covering 128-143 (DEVVVSEAESHVSGVS) has biased composition (low complexity). Residues 155-172 (NKANSQRDSSQESQSGTV) are compositionally biased toward polar residues. Residues S173 and S183 each carry the phosphoserine modification. K210 participates in a covalent cross-link: Glycyl lysine isopeptide (Lys-Gly) (interchain with G-Cter in SUMO2). Residues S229, S240, S248, and S255 each carry the phosphoserine modification. The span at 231 to 255 (ATQLSARPLSQRNMPNVSDSETYNS) shows a compositional bias: polar residues. 4 disordered regions span residues 231 to 277 (ATQL…HQNL), 312 to 353 (KVIN…QLSS), 377 to 480 (DKRG…AEDL), and 501 to 552 (DKNF…DLLS). K317 participates in a covalent cross-link: Glycyl lysine isopeptide (Lys-Gly) (interchain with G-Cter in SUMO2). A compositionally biased stretch (polar residues) spans 321–353 (RSLSEAQDTSLQQSVSQNHSSTPNKKPTFQLSS). S324 and S330 each carry phosphoserine. Glycyl lysine isopeptide (Lys-Gly) (interchain with G-Cter in SUMO2) cross-links involve residues K345 and K384. Residues 377-387 (DKRGGSGKKSD) are compositionally biased toward basic and acidic residues. Polar residues predominate over residues 431 to 440 (LSMTQDTTDS). The span at 447 to 456 (SSDESQQSDS) shows a compositional bias: low complexity. Residues S476 and S512 each carry the phosphoserine modification. The stretch at 512-541 (SEVAIEEEKEEEEKEEENSEEDSSDSDENK) forms a coiled coil. The segment covering 515 to 550 (AIEEEKEEEEKEEENSEEDSSDSDENKDESSDEEDL) has biased composition (acidic residues). Residues 550-607 (LLSNTKSKLLKLTSSSIDPGLNIKQLGGLYINFNVDKLQPHKETLTQIKEKKKNELLQ) are tdBR region; mediates interaction with DNTT. Glycyl lysine isopeptide (Lys-Gly) (interchain with G-Cter in SUMO2) cross-links involve residues K560, K586, and K608. The residue at position 612 (T612) is a Phosphothreonine. Positions 621–647 (VPPYSESKHRLQKQRRKERQKTAGNGW) are disordered. K628 is covalently cross-linked (Glycyl lysine isopeptide (Lys-Gly) (interchain with G-Cter in SUMO2)). Residues 630 to 639 (RLQKQRRKER) are compositionally biased toward basic residues. Glycyl lysine isopeptide (Lys-Gly) (interchain with G-Cter in SUMO2) cross-links involve residues K651, K660, K688, and K733.

As to quaternary structure, forms a ternary complex with DNTT and core histone; interaction with PCNA releases DNTT and H2A/H2B histones from this ternary complex. Interacts with ESR1, ESR2, PPARG and RXRA. Part of the small subunit (SSU) processome, composed of more than 70 proteins and the RNA chaperone small nucleolar RNA (snoRNA) U3.

Its subcellular location is the nucleus. The protein localises to the nucleolus. Functionally, regulates the transcriptional activity of DNTT and ESR1. May function as a chromatin remodeling protein. Part of the small subunit (SSU) processome, first precursor of the small eukaryotic ribosomal subunit. During the assembly of the SSU processome in the nucleolus, many ribosome biogenesis factors, an RNA chaperone and ribosomal proteins associate with the nascent pre-rRNA and work in concert to generate RNA folding, modifications, rearrangements and cleavage as well as targeted degradation of pre-ribosomal RNA by the RNA exosome. This Mus musculus (Mouse) protein is Deoxynucleotidyltransferase terminal-interacting protein 2 (Dnttip2).